Consider the following 95-residue polypeptide: Aspartyl/glutamyl-tRNA(Asn/Gln) amidotransferase subunit C (95 aa).

The protein belongs to the GatC family. As to quaternary structure, heterotrimer of A, B and C subunits.

The catalysed reaction is L-glutamyl-tRNA(Gln) + L-glutamine + ATP + H2O = L-glutaminyl-tRNA(Gln) + L-glutamate + ADP + phosphate + H(+). It catalyses the reaction L-aspartyl-tRNA(Asn) + L-glutamine + ATP + H2O = L-asparaginyl-tRNA(Asn) + L-glutamate + ADP + phosphate + 2 H(+). In terms of biological role, allows the formation of correctly charged Asn-tRNA(Asn) or Gln-tRNA(Gln) through the transamidation of misacylated Asp-tRNA(Asn) or Glu-tRNA(Gln) in organisms which lack either or both of asparaginyl-tRNA or glutaminyl-tRNA synthetases. The reaction takes place in the presence of glutamine and ATP through an activated phospho-Asp-tRNA(Asn) or phospho-Glu-tRNA(Gln). This is Aspartyl/glutamyl-tRNA(Asn/Gln) amidotransferase subunit C from Ruthia magnifica subsp. Calyptogena magnifica.